The chain runs to 267 residues: Inositol-1-monophosphatase (267 aa).

Mg(2+) contacts are provided by Glu66, Asp84, Leu86, and Asp87. Glu66 provides a ligand contact to substrate. Substrate-binding positions include 86-89, Arg182, and Asp213; that span reads LDGS. A Mg(2+)-binding site is contributed by Asp213.

It belongs to the inositol monophosphatase superfamily. It depends on Mg(2+) as a cofactor.

The enzyme catalyses a myo-inositol phosphate + H2O = myo-inositol + phosphate. The chain is Inositol-1-monophosphatase (suhB) from Aeropyrum pernix (strain ATCC 700893 / DSM 11879 / JCM 9820 / NBRC 100138 / K1).